A 286-amino-acid chain; its full sequence is 2-hydroxy-6-oxo-6-phenylhexa-2,4-dienoate hydrolase (286 aa).

Substrate-binding positions include 42–43, Asn-51, Asn-111, Thr-180, and Arg-190; that span reads GG. Residue His-265 is the Proton acceptor of the active site. Trp-266 is a binding site for substrate.

The protein belongs to the AB hydrolase superfamily. BphD family. Homodimer.

The catalysed reaction is 2,6-dioxo-6-phenylhexa-3-enoate + H2O = 2-oxopent-4-enoate + benzoate + H(+). Its pathway is xenobiotic degradation; biphenyl degradation; 2-hydroxy-2,4-pentadienoate and benzoate from biphenyl: step 4/4. Functionally, catalyzes an unusual C-C bond hydrolysis of 2-hydroxy-6-oxo-6-phenylhexa-2,4-dienoic acid (HOPDA) to produce benzoic acid and 2-hydroxy-2,4-pentadienoic acid (HPD). In Comamonas testosteroni (Pseudomonas testosteroni), this protein is 2-hydroxy-6-oxo-6-phenylhexa-2,4-dienoate hydrolase.